Reading from the N-terminus, the 243-residue chain is 3-deoxy-manno-octulosonate cytidylyltransferase (243 aa).

Belongs to the KdsB family.

It is found in the cytoplasm. The enzyme catalyses 3-deoxy-alpha-D-manno-oct-2-ulosonate + CTP = CMP-3-deoxy-beta-D-manno-octulosonate + diphosphate. It functions in the pathway nucleotide-sugar biosynthesis; CMP-3-deoxy-D-manno-octulosonate biosynthesis; CMP-3-deoxy-D-manno-octulosonate from 3-deoxy-D-manno-octulosonate and CTP: step 1/1. The protein operates within bacterial outer membrane biogenesis; lipopolysaccharide biosynthesis. Its function is as follows. Activates KDO (a required 8-carbon sugar) for incorporation into bacterial lipopolysaccharide in Gram-negative bacteria. This is 3-deoxy-manno-octulosonate cytidylyltransferase from Helicobacter pylori (strain P12).